Consider the following 303-residue polypeptide: uncharacterized protein (303 aa).

The residue at position 63 (Ser63) is a Phosphoserine.

This sequence belongs to the HAD-like hydrolase superfamily.

It localises to the cytoplasm. The protein localises to the nucleus. This is an uncharacterized protein from Schizosaccharomyces pombe (strain 972 / ATCC 24843) (Fission yeast).